The primary structure comprises 27 residues: Caerulein precursor fragment R8 (27 aa).

Expressed by the skin glands.

It localises to the secreted. Functionally, antimicrobial peptide. In Xenopus ruwenzoriensis (Uganda clawed frog), this protein is Caerulein precursor fragment R8.